A 320-amino-acid chain; its full sequence is ADP/ATP translocase 4 (320 aa).

At 1–20 (MSNESSKKQSSKKALFDPVS) the chain is on the mitochondrial intermembrane side. Residues 19 to 111 (VSFSKDLLAG…FAFKDKYKEL (93 aa)) form a Solcar 1 repeat. Residues 21 to 50 (FSKDLLAGGVAAAVSKTAVAPIERVKLLLQ) traverse the membrane as a helical segment. Topologically, residues 51-87 (VQASSKQISPEARYKGMLDCLVRIPREQGFLSYWRGN) are mitochondrial matrix. A helical transmembrane segment spans residues 88 to 112 (LANVIRYFPTQALNFAFKDKYKELF). ADP is bound by residues Arg93 and Lys105. Topologically, residues 113–122 (MSGVNKEKQF) are mitochondrial intermembrane. The helical transmembrane segment at 123–143 (WRWFLANLASGGAAGATSLCV) threads the bilayer. Solcar repeat units follow at residues 124 to 214 (RWFL…VKGL) and 221 to 308 (TPFL…IKEF). The Mitochondrial matrix segment spans residues 144–191 (VYPLDFARTRLGVDIGKGPEQRQFTGLGDCIMKIAKSDGLIGLYQGFG). A helical transmembrane segment spans residues 192 to 212 (VSVQGIIVYRASYFGAYDTVK). Residues 213–223 (GLLPKPKETPF) lie on the Mitochondrial intermembrane side of the membrane. The chain crosses the membrane as a helical span at residues 224–244 (LVSFIIAQIVTTCSGILSYPF). Residues 245–284 (DTVRRRMMMQSGESDRQYKGTIDCFLKIYRHEGVPAFFRG) lie on the Mitochondrial matrix side of the membrane. Residue Arg248 participates in ADP binding. Residues 248–253 (RRRMMM) form an important for transport activity region. Residues 248-253 (RRRMMM) carry the Nucleotide carrier signature motif motif. A helical membrane pass occupies residues 285–302 (AFSNILRGTGGALVLVLY). Residues 303 to 320 (DKIKEFLNIDVGGSSSGD) lie on the Mitochondrial intermembrane side of the membrane.

This sequence belongs to the mitochondrial carrier (TC 2.A.29) family. Monomer. In terms of tissue distribution, specifically expressed in undifferentiated embryonic stem cells and germ cells. Expression is down-regulated after embryonic stem cells differentiation. In adults, only expressed in developing gametes in testis. In testis, expressed at higher level in spermatocytes. Expression is probably associated with entry of the male germ cells into meiosis. Expressed at very low level in Sertoli cells.

The protein resides in the mitochondrion inner membrane. It localises to the membrane. It is found in the cell projection. The protein localises to the cilium. Its subcellular location is the flagellum membrane. The enzyme catalyses ADP(in) + ATP(out) = ADP(out) + ATP(in). It catalyses the reaction dATP(out) + ADP(in) = dATP(in) + ADP(out). The catalysed reaction is dADP(in) + ADP(out) = dADP(out) + ADP(in). It carries out the reaction H(+)(in) = H(+)(out). With respect to regulation, the matrix-open state (m-state) is inhibited by the membrane-permeable bongkrekic acid (BKA). The cytoplasmic-open state (c-state) is inhibited by the membrane-impermeable toxic inhibitor carboxyatractyloside (CATR). Proton transporter activity is inhibited by ADP:ATP antiporter activity. Functionally, ADP:ATP antiporter that mediates import of ADP into the mitochondrial matrix for ATP synthesis, and export of ATP out to fuel the cell. Cycles between the cytoplasmic-open state (c-state) and the matrix-open state (m-state): operates by the alternating access mechanism with a single substrate-binding site intermittently exposed to either the cytosolic (c-state) or matrix (m-state) side of the inner mitochondrial membrane. Specifically required during spermatogenesis, probably to mediate ADP:ATP exchange in spermatocytes. Large ATP supplies from mitochondria may be critical for normal progression of spermatogenesis during early stages of meiotic prophase I, including DNA double-strand break repair and chromosomal synapsis. In addition to its ADP:ATP antiporter activity, also involved in mitochondrial uncoupling and mitochondrial permeability transition pore (mPTP) activity. Plays a role in mitochondrial uncoupling by acting as a proton transporter: proton transport uncouples the proton flows via the electron transport chain and ATP synthase to reduce the efficiency of ATP production and cause mitochondrial thermogenesis. Proton transporter activity is inhibited by ADP:ATP antiporter activity, suggesting that SLC25A31/ANT4 acts as a master regulator of mitochondrial energy output by maintaining a delicate balance between ATP production (ADP:ATP antiporter activity) and thermogenesis (proton transporter activity). Proton transporter activity requires free fatty acids as cofactor, but does not transport it. Among nucleotides, may also exchange ADP for dATP and dADP. Also plays a key role in mPTP opening, a non-specific pore that enables free passage of the mitochondrial membranes to solutes of up to 1.5 kDa, and which contributes to cell death. It is however unclear if SLC25A31/ANT4 constitutes a pore-forming component of mPTP or regulates it. The chain is ADP/ATP translocase 4 from Mus musculus (Mouse).